The primary structure comprises 179 residues: Putative ADP-ribosylation factor-like protein 5C (179 aa).

Gly2 carries N-myristoyl glycine lipidation. Residues 23–30 (GLDNEGKT), 66–70 (DIVRP), and 125–128 (NKQD) contribute to the GTP site.

This sequence belongs to the small GTPase superfamily. Arf family.

In terms of biological role, binds and exchanges GTP and GDP. The chain is Putative ADP-ribosylation factor-like protein 5C (ARL5C) from Homo sapiens (Human).